A 62-amino-acid polypeptide reads, in one-letter code: MFTLKKSLLLLFFLGTISLSLCEQERGADEEENGGEVTEEEVKRNILSGIANGINRVLSWFG.

Positions 1-22 are cleaved as a signal peptide; sequence MFTLKKSLLLLFFLGTISLSLC. Positions 23–42 are cleaved as a propeptide — removed in mature form; it reads EQERGADEEENGGEVTEEEV.

It belongs to the frog skin active peptide (FSAP) family. Brevinin subfamily. As to expression, expressed by the skin glands.

The protein localises to the secreted. In terms of biological role, antimicrobial peptide. Active against a variety of Gram-negative and Gram-positive bacterial strains. Not active against fungi. Shows weak hemolytic activity against human erythrocytes. The sequence is that of Amolopin-p-MT1 from Amolops mantzorum (Sichuan torrent frog).